A 369-amino-acid chain; its full sequence is MSTIAGESSSSSKMPENSQPTTTEKGSEYLEQLANEAEELRKKLDQERHKLNDIPIQQAAERLDVMGALGVKQRRILKGHVGKVLCMDWSLDKRHIVSSSQDGKVIVWDGFTTNKEHALTMPTTWVMACAFSPSSQMIACGGLDNKCSVVPLSFEDDIIQKKRQVATHTSYMSCCTFLRSDNLILTGSGDSTCAIWDVESGQLIQNFHGHTGDVFAIDVPKCDTGNTFISAGADKHSLVWDIRSGQCVQSFEGHEADINTVRFHPNGDAFATGSDDATCRLFDLRADRQVCVYEKESILFPVNGVDFSLSGRILFAGYGDYRVGVWDSLKCARHSVLYGHENRISCLRTSPDGTAVCSASWDCTIRIWA.

Polar residues predominate over residues 1 to 24 (MSTIAGESSSSSKMPENSQPTTTE). Residues 1–28 (MSTIAGESSSSSKMPENSQPTTTEKGSE) form a disordered region. WD repeat units follow at residues 79–109 (GHVG…IVWD), 121–151 (MPTT…SVVP), 167–197 (THTS…AIWD), 209–241 (GHTG…LVWD), 253–283 (GHEA…RLFD), 297–327 (SILF…GVWD), and 339–369 (GHEN…RIWA).

This sequence belongs to the WD repeat G protein beta family. G proteins are composed of 3 units, alpha, beta and gamma. Interacts with G protein gamma subunits gpc-1 and gpc-2 and with egl-10 and eat-16.

Guanine nucleotide-binding proteins (G proteins) are involved as a modulator or transducer in various transmembrane signaling systems. The beta and gamma chains are required for the GTPase activity, for replacement of GDP by GTP, and for G protein-effector interaction. Plays a role in regulating dopamine-mediated locomotion behavior. This chain is Guanine nucleotide-binding protein subunit beta-2, found in Caenorhabditis elegans.